The chain runs to 207 residues: Protein GrpE (207 aa).

Residues 1-31 (MSEHQTPPEEDLTVANGDSAEAVSEPDVTVA) are disordered.

It belongs to the GrpE family. In terms of assembly, homodimer.

The protein resides in the cytoplasm. Its function is as follows. Participates actively in the response to hyperosmotic and heat shock by preventing the aggregation of stress-denatured proteins, in association with DnaK and GrpE. It is the nucleotide exchange factor for DnaK and may function as a thermosensor. Unfolded proteins bind initially to DnaJ; upon interaction with the DnaJ-bound protein, DnaK hydrolyzes its bound ATP, resulting in the formation of a stable complex. GrpE releases ADP from DnaK; ATP binding to DnaK triggers the release of the substrate protein, thus completing the reaction cycle. Several rounds of ATP-dependent interactions between DnaJ, DnaK and GrpE are required for fully efficient folding. The chain is Protein GrpE from Synechococcus elongatus (strain ATCC 33912 / PCC 7942 / FACHB-805) (Anacystis nidulans R2).